The primary structure comprises 328 residues: Tetraacyldisaccharide 4'-kinase (328 aa).

T55–T62 serves as a coordination point for ATP.

It belongs to the LpxK family.

It carries out the reaction a lipid A disaccharide + ATP = a lipid IVA + ADP + H(+). Its pathway is glycolipid biosynthesis; lipid IV(A) biosynthesis; lipid IV(A) from (3R)-3-hydroxytetradecanoyl-[acyl-carrier-protein] and UDP-N-acetyl-alpha-D-glucosamine: step 6/6. In terms of biological role, transfers the gamma-phosphate of ATP to the 4'-position of a tetraacyldisaccharide 1-phosphate intermediate (termed DS-1-P) to form tetraacyldisaccharide 1,4'-bis-phosphate (lipid IVA). The protein is Tetraacyldisaccharide 4'-kinase of Escherichia coli O127:H6 (strain E2348/69 / EPEC).